The following is a 957-amino-acid chain: Glycine dehydrogenase (decarboxylating) (957 aa).

Lys-708 carries the post-translational modification N6-(pyridoxal phosphate)lysine.

This sequence belongs to the GcvP family. As to quaternary structure, the glycine cleavage system is composed of four proteins: P, T, L and H. It depends on pyridoxal 5'-phosphate as a cofactor.

The catalysed reaction is N(6)-[(R)-lipoyl]-L-lysyl-[glycine-cleavage complex H protein] + glycine + H(+) = N(6)-[(R)-S(8)-aminomethyldihydrolipoyl]-L-lysyl-[glycine-cleavage complex H protein] + CO2. Its function is as follows. The glycine cleavage system catalyzes the degradation of glycine. The P protein binds the alpha-amino group of glycine through its pyridoxal phosphate cofactor; CO(2) is released and the remaining methylamine moiety is then transferred to the lipoamide cofactor of the H protein. This chain is Glycine dehydrogenase (decarboxylating), found in Pectobacterium atrosepticum (strain SCRI 1043 / ATCC BAA-672) (Erwinia carotovora subsp. atroseptica).